The primary structure comprises 471 residues: MDERFNKWLLTPVLTLLFVVIMYQYVSPSCTSSCTNFGEQPRAGEAGPPAVPGPARRAQAPPEEWERRPQLPPPPRGPPEGPRGAAAPEEEDEEPGDPREGEEEEEEDEPDPEAPENGSLPRFVPRFNFSLKDLTRFVDFNIKGRDVIVFLHIQKTGGTTFGRHLVKNIRLEQPCSCKAGQKKCTCHRPGKKETWLFSRFSTGWSCGLHADWTELTNCVPAIMEKKDCPRNHSHTRNFYYITMLRDPVSRYLSEWKHVQRGATWKTSLHMCDGRSPTPDELPTCYPGDDWSGVSLREFMDCTYNLANNRQVRMLADLSLVGCYNLTFMNESERNTILLQSAKNNLKNMAFFGLTEFQRKTQFLFERTFNLKFISPFTQFNITRASNVEINEGARQRIEDLNFLDMQLYEYAKDLFQQRYHHTKQLEHQRDRQKRREERRLQREHRDHQWPKEDGAAEGTVTEDYNSQVVRW.

The Cytoplasmic portion of the chain corresponds to 1 to 4; the sequence is MDER. A helical; Signal-anchor for type II membrane protein membrane pass occupies residues 5–27; it reads FNKWLLTPVLTLLFVVIMYQYVS. Residues 28-471 are Lumenal-facing; the sequence is PSCTSSCTNF…EDYNSQVVRW (444 aa). Residues 39–122 form a disordered region; it reads EQPRAGEAGP…EAPENGSLPR (84 aa). Residues 41-62 show a composition bias toward low complexity; sequence PRAGEAGPPAVPGPARRAQAPP. Pro residues predominate over residues 70 to 81; the sequence is QLPPPPRGPPEG. Positions 88-114 are enriched in acidic residues; it reads PEEEDEEPGDPREGEEEEEEDEPDPEA. 2 N-linked (GlcNAc...) asparagine glycosylation sites follow: Asn117 and Asn128. 152–160 lines the 3'-phosphoadenylyl sulfate pocket; it reads HIQKTGGTT. Substrate is bound by residues 182-183, Arg199, Trp204, and His209; that span reads KK. His209 serves as the catalytic Proton acceptor. Residue Asn231 is glycosylated (N-linked (GlcNAc...) asparagine). 2 residues coordinate 3'-phosphoadenylyl sulfate: Arg245 and Ser253. The substrate site is built by His257 and Trp264. Asn324 and Asn329 each carry an N-linked (GlcNAc...) asparagine glycan. 377–379 provides a ligand contact to 3'-phosphoadenylyl sulfate; sequence TQF. An N-linked (GlcNAc...) asparagine glycan is attached at Asn380. A 3'-phosphoadenylyl sulfate-binding site is contributed by 383-384; it reads RA. The disordered stretch occupies residues 422–471; sequence TKQLEHQRDRQKRREERRLQREHRDHQWPKEDGAAEGTVTEDYNSQVVRW. Residues 423–454 are compositionally biased toward basic and acidic residues; sequence KQLEHQRDRQKRREERRLQREHRDHQWPKEDG. The span at 462-471 shows a compositional bias: polar residues; sequence EDYNSQVVRW.

This sequence belongs to the sulfotransferase 6 family.

Its subcellular location is the membrane. It carries out the reaction alpha-D-glucosaminyl-[heparan sulfate](n) + 3'-phosphoadenylyl sulfate = 6-sulfo-alpha-D-glucosaminyl-[heparan sulfate](n) + adenosine 3',5'-bisphosphate + H(+). In terms of biological role, 6-O-sulfation enzyme which catalyzes the transfer of sulfate from 3'-phosphoadenosine 5'-phosphosulfate (PAPS) to position 6 of the N-sulfoglucosamine residue (GlcNS) of heparan sulfate. This Homo sapiens (Human) protein is Heparan-sulfate 6-O-sulfotransferase 3 (HS6ST3).